We begin with the raw amino-acid sequence, 67 residues long: Large ribosomal subunit protein bL35 (67 aa).

The protein belongs to the bacterial ribosomal protein bL35 family.

The polypeptide is Large ribosomal subunit protein bL35 (Sinorhizobium fredii (strain NBRC 101917 / NGR234)).